We begin with the raw amino-acid sequence, 88 residues long: Small ribosomal subunit protein bS18B (88 aa).

This sequence belongs to the bacterial ribosomal protein bS18 family. In terms of assembly, part of the 30S ribosomal subunit. Forms a tight heterodimer with protein bS6.

Its function is as follows. Binds as a heterodimer with protein bS6 to the central domain of the 16S rRNA, where it helps stabilize the platform of the 30S subunit. In Roseiflexus castenholzii (strain DSM 13941 / HLO8), this protein is Small ribosomal subunit protein bS18B.